The following is a 262-amino-acid chain: Snake venom serine protease (262 aa).

An N-terminal signal peptide occupies residues 1–18 (MVLIRVLANLLILQLSYA). The propeptide occupies 19–24 (QKSSEL). One can recognise a Peptidase S1 domain in the interval 25-253 (VIGGDECNIN…YTEWIQSIIA (229 aa)). 6 cysteine pairs are disulfide-bonded: C31/C167, C50/C66, C102/C260, C146/C214, C178/C193, and C204/C229. Residues H65 and D114 each act as charge relay system in the active site. Residues N125 and N158 are each glycosylated (N-linked (GlcNAc...) asparagine). S208 acts as the Charge relay system in catalysis.

This sequence belongs to the peptidase S1 family. Snake venom subfamily. As to quaternary structure, monomer. As to expression, expressed by the venom gland.

It is found in the secreted. Snake venom serine protease that may act in the hemostasis system of the prey. The protein is Snake venom serine protease of Crotalus durissus durissus (Central American rattlesnake).